Here is a 485-residue protein sequence, read N- to C-terminus: Rhamnulokinase (485 aa).

8-12 (ASSGR) contacts ATP. Residues Gly78 and 231-233 (HDT) contribute to the substrate site. Asp232 serves as the catalytic Proton acceptor. Thr254 is a binding site for ATP. Position 291 (Asn291) interacts with substrate. Gln299 provides a ligand contact to ATP. Cys348 and Cys365 are joined by a disulfide. Gly397 is a binding site for ATP. Residues Cys408 and Cys412 are joined by a disulfide bond.

This sequence belongs to the rhamnulokinase family. Requires Mg(2+) as cofactor.

The catalysed reaction is L-rhamnulose + ATP = L-rhamnulose 1-phosphate + ADP + H(+). The protein operates within carbohydrate degradation; L-rhamnose degradation; glycerone phosphate from L-rhamnose: step 2/3. Its function is as follows. Involved in the catabolism of L-rhamnose (6-deoxy-L-mannose). Catalyzes the transfer of the gamma-phosphate group from ATP to the 1-hydroxyl group of L-rhamnulose to yield L-rhamnulose 1-phosphate. The protein is Rhamnulokinase of Yersinia pestis bv. Antiqua (strain Angola).